Here is a 352-residue protein sequence, read N- to C-terminus: Non-disjunction protein 1 (352 aa).

In terms of assembly, interacts with MPS3.

The protein localises to the nucleus. The protein resides in the chromosome. It localises to the telomere. In terms of biological role, required for telomeric clustering (bouquet stage) during meiosis 1 prophase, formation and efficient homolog pairing, meiosis 1 disjunction, and telomere deletion during meiosis. Also promotes meiotic recombination. The polypeptide is Non-disjunction protein 1 (NDJ1) (Saccharomyces cerevisiae (strain ATCC 204508 / S288c) (Baker's yeast)).